The chain runs to 87 residues: Small ribosomal subunit protein bS20 (87 aa).

Over residues 1–11 (MANIKSAKKRA) the composition is skewed to basic residues. The tract at residues 1–27 (MANIKSAKKRAVQSEKRRQHNASQRSM) is disordered.

This sequence belongs to the bacterial ribosomal protein bS20 family.

Its function is as follows. Binds directly to 16S ribosomal RNA. This Haemophilus influenzae (strain PittEE) protein is Small ribosomal subunit protein bS20.